The following is a 207-amino-acid chain: Transcriptional regulator GfcR (207 aa).

It belongs to the purine/pyrimidine phosphoribosyltransferase family. GfcR subfamily.

The chain is Transcriptional regulator GfcR from Methanocella arvoryzae (strain DSM 22066 / NBRC 105507 / MRE50).